The following is an 81-amino-acid chain: Photosystem I iron-sulfur center (81 aa).

2 4Fe-4S ferredoxin-type domains span residues 2 to 31 (SHSV…MIPW) and 39 to 68 (IASA…VRVY). The [4Fe-4S] cluster site is built by Cys-11, Cys-14, Cys-17, Cys-21, Cys-48, Cys-51, Cys-54, and Cys-58.

As to quaternary structure, the eukaryotic PSI reaction center is composed of at least 11 subunits. The cofactor is [4Fe-4S] cluster.

It localises to the plastid. The protein resides in the chloroplast thylakoid membrane. The enzyme catalyses reduced [plastocyanin] + hnu + oxidized [2Fe-2S]-[ferredoxin] = oxidized [plastocyanin] + reduced [2Fe-2S]-[ferredoxin]. In terms of biological role, apoprotein for the two 4Fe-4S centers FA and FB of photosystem I (PSI); essential for photochemical activity. FB is the terminal electron acceptor of PSI, donating electrons to ferredoxin. The C-terminus interacts with PsaA/B/D and helps assemble the protein into the PSI complex. Required for binding of PsaD and PsaE to PSI. PSI is a plastocyanin-ferredoxin oxidoreductase, converting photonic excitation into a charge separation, which transfers an electron from the donor P700 chlorophyll pair to the spectroscopically characterized acceptors A0, A1, FX, FA and FB in turn. The polypeptide is Photosystem I iron-sulfur center (Arabis hirsuta (Hairy rock-cress)).